The primary structure comprises 576 residues: Sodium/proton antiporter 1 (576 aa).

A chloroplast-targeting transit peptide spans 1-60; sequence MAVFPIGSHFAPPHQLTKRHVIATSSPISISTRLPQNVSFSKVSGVTGSTRLSKHGVLVR. The next 9 membrane-spanning stretches (helical) occupy residues 237-257, 279-299, 320-340, 357-377, 379-399, 426-446, 462-482, 501-521, and 541-561; these read TLLWVVGFVTFFLSSILDNLT, LGGVVVIAANAGGAWTPIGDV, FLPSVVSLAVPLALMSLTSEV, APRGKLVFGVGLGALVFVPVF, ALTGLPPYMGILLGLGVLWIL, GALFFLGILLSVSSLEAAGIL, LIASAIGVVSAIIDNVPLVAA, LIAFCAGTGGSMLVIGSAAGV, and FAFAGYAAGIAAYLAVHNLHF.

This sequence belongs to the NhaD Na(+)/H(+) (TC 2.A.62) antiporter family. Mostly expressed in mature and senescent leaves, and, to a lower extent, in seeds, roots, shoots, flowers and developing siliques.

It is found in the plastid. Its subcellular location is the chloroplast membrane. The protein resides in the chloroplast envelope. Functionally, na(+)/H(+) antiporter that extrudes sodium in exchange for external protons. This chain is Sodium/proton antiporter 1, found in Arabidopsis thaliana (Mouse-ear cress).